A 272-amino-acid chain; its full sequence is Elongation factor Ts (272 aa).

An involved in Mg(2+) ion dislocation from EF-Tu region spans residues 86-89 (TDFV).

It belongs to the EF-Ts family.

It is found in the cytoplasm. In terms of biological role, associates with the EF-Tu.GDP complex and induces the exchange of GDP to GTP. It remains bound to the aminoacyl-tRNA.EF-Tu.GTP complex up to the GTP hydrolysis stage on the ribosome. The polypeptide is Elongation factor Ts (Blochmanniella pennsylvanica (strain BPEN)).